The chain runs to 252 residues: Biosynthetic peptidoglycan transglycosylase (252 aa).

The chain crosses the membrane as a helical span at residues 23–43 (IGFLLGCIVAGVVAMQVYFFL).

Belongs to the glycosyltransferase 51 family.

The protein localises to the cell inner membrane. The enzyme catalyses [GlcNAc-(1-&gt;4)-Mur2Ac(oyl-L-Ala-gamma-D-Glu-L-Lys-D-Ala-D-Ala)](n)-di-trans,octa-cis-undecaprenyl diphosphate + beta-D-GlcNAc-(1-&gt;4)-Mur2Ac(oyl-L-Ala-gamma-D-Glu-L-Lys-D-Ala-D-Ala)-di-trans,octa-cis-undecaprenyl diphosphate = [GlcNAc-(1-&gt;4)-Mur2Ac(oyl-L-Ala-gamma-D-Glu-L-Lys-D-Ala-D-Ala)](n+1)-di-trans,octa-cis-undecaprenyl diphosphate + di-trans,octa-cis-undecaprenyl diphosphate + H(+). It participates in cell wall biogenesis; peptidoglycan biosynthesis. Peptidoglycan polymerase that catalyzes glycan chain elongation from lipid-linked precursors. The polypeptide is Biosynthetic peptidoglycan transglycosylase (Cupriavidus pinatubonensis (strain JMP 134 / LMG 1197) (Cupriavidus necator (strain JMP 134))).